The following is a 171-amino-acid chain: Phosphinothricin N-acetyltransferase (171 aa).

In terms of domain architecture, N-acetyltransferase spans valine 7–leucine 171. Acetyl-CoA contacts are provided by residues valine 94–valine 96, glycine 102–serine 107, and asparagine 133.

This sequence belongs to the acetyltransferase family. PAT/BAR subfamily.

The enzyme catalyses phosphinothricin + acetyl-CoA = N-acetylphosphinothricin + CoA + H(+). Inactivates phosphinothricin (PPT) by transfer of an acetyl group from acetyl CoA. The physiological substrate could be a structurally related compound. The sequence is that of Phosphinothricin N-acetyltransferase from Streptomyces coelicolor (strain ATCC BAA-471 / A3(2) / M145).